Consider the following 534-residue polypeptide: Protein BFR2 (534 aa).

The interval 27–148 (ENASLFQHNE…ETEEAQQKRH (122 aa)) is disordered. A phosphoserine mark is found at Ser41 and Ser44. Residues 52–77 (EETKKAHYLEVEKSKLRAEKGLELND) show a composition bias toward basic and acidic residues. Positions 86–161 (SRQALYEEVS…KLIQQETKQA (76 aa)) form a coiled coil. Composition is skewed to acidic residues over residues 93-114 (EVSE…EEDA) and 121-142 (SEDE…ETEE). Phosphoserine is present on residues Ser366, Ser372, and Ser379.

It belongs to the AATF family.

The protein resides in the nucleus. It localises to the nucleolus. Its function is as follows. Involved in endoplasmic reticulum to Golgi transport. Involved in a protein-transport step blocked by brefeldin A, which disrupts the Golgi apparatus and its incoming protein flux. May also be involved for mass growth or cell proliferation. The polypeptide is Protein BFR2 (BFR2) (Saccharomyces cerevisiae (strain ATCC 204508 / S288c) (Baker's yeast)).